The following is a 169-amino-acid chain: Phosphopantetheine adenylyltransferase (169 aa).

S10 serves as a coordination point for substrate. Residues 10 to 11 (SF) and H18 contribute to the ATP site. Residues K42, T79, and R93 each contribute to the substrate site. ATP contacts are provided by residues 94 to 96 (GLR), E104, and 129 to 135 (VRPITAT).

It belongs to the bacterial CoaD family. In terms of assembly, homohexamer. Mg(2+) is required as a cofactor.

The protein resides in the cytoplasm. The enzyme catalyses (R)-4'-phosphopantetheine + ATP + H(+) = 3'-dephospho-CoA + diphosphate. It functions in the pathway cofactor biosynthesis; coenzyme A biosynthesis; CoA from (R)-pantothenate: step 4/5. In terms of biological role, reversibly transfers an adenylyl group from ATP to 4'-phosphopantetheine, yielding dephospho-CoA (dPCoA) and pyrophosphate. This chain is Phosphopantetheine adenylyltransferase, found in Rhodopseudomonas palustris (strain ATCC BAA-98 / CGA009).